A 1849-amino-acid polypeptide reads, in one-letter code: MYEGKKTKNMFLTRALEKILADKEVKKAHHSQLRKACEVALEEIKAETEKQSPPHGEAKAGSSTLPPVKSKTNFIEADKYFLPFELACQSKCPRIVSTSLDCLQKLIAYGHLTGNAPDSTTPGKKLIDRIIETICGCFQGPQTDEGVQLQIIKALLTAVTSQHIEIHEGTVLQAVRTCYNIYLASKNLINQTTAKATLTQMLNVIFARMENQALQEAKQMEKERHRQHHHLLQSPVSHHEPESPQLRYLPPQTVDHISQEHEGDLDLHTNDVDKSLQDDTEPENGSDISSAENEQTEADQATAAETLSKNEVLYDGENHDCEEKPQDIVQNIVEEMVNIVVGDMGEGTTINASADGNIGTIEDGSDSENIQANGIPGTPISVAYTPSLPDDRLSVSSNDTQESGNSSGPSPGAKFSHILQKDAFLVFRSLCKLSMKPLSDGPPDPKSHELRSKILSLQLLLSILQNAGPIFRTNEMFINAIKQYLCVALSKNGVSSVPEVFELSLSIFLTLLSNFKTHLKMQIEVFFKEIFLYILETSTSSFDHKWMVIQTLTRICADAQSVVDIYVNYDCDLNAANIFERLVNDLSKIAQGRGSQELGMSNVQELSLRKKGLECLVSILKCMVEWSKDQYVNPNSQTTLGQEKPSEQEMSEIKHPETINRYGSLNSLESTSSSGIGSYSTQMSGTDNPEQFEVLKQQKEIIEQGIDLFNKKPKRGIQYLQEQGMLGTTPEDIAQFLHQEERLDSTQVGEFLGDNDKFNKEVMYAYVDQHDFSGKDFVSALRMFLEGFRLPGEAQKIDRLMEKFAARYLECNQGQTLFASADTAYVLAYSIIMLTTDLHSPQVKNKMTKEQYIKMNRGINDSKDLPEEYLSAIYNEIAGKKISMKETKELTIPTKSSKQNVASEKQRRLLYNLEMEQMAKTAKALMEAVSHVQAPFTSATHLEHVRPMFKLAWTPFLAAFSVGLQDCDDTEVASLCLEGIRCAIRIACIFSIQLERDAYVQALARFTLLTVSSGITEMKQKNIDTIKTLITVAHTDGNYLGNSWHEILKCISQLELAQLIGTGVKPRYISGTVRGREGSLTGTKDQAPDEFVGLGLVGGNVDWKQIASIQESIGETSSQSVVVAVDRIFTGSTRLDGNAIVDFVRWLCAVSMDELLSTTHPRMFSLQKIVEISYYNMGRIRLQWSRIWEVIGDHFNKVGCNPNEDVAIFAVDSLRQLSMKFLEKGELANFRFQKDFLRPFEHIMKRNRSPTIRDMVVRCIAQMVNSQAANIRSGWKNIFSVFHLAASDQDESIVELAFQTTGHIVTLVFEKHFPATIDSFQDAVKCLSEFACNAAFPDTSMEAIRLIRHCAKYVSDRPQAFKEYTSDDMNVAPEDRVWVRGWFPILFELSCIINRCKLDVRTRGLTVMFEIMKTYGHTYEKHWWQDLFRIVFRIFDNMKLPEQQTEKAEWMTTTCNHALYAICDVFTQYLEVLSDVLLDDIFAQLYWCVQQDNEQLARSGTNCLENVVILNGEKFTLEIWDKTCNCTLDIFKTTIPHALLTWRPNSGETAPPPPSPVSEKPLDTISQKSVDIHDSIQPRSVDNRPQAPLVSASAVNEEVSKIKSTAKFPEQKLFAALLIKCVVQLELIQTIDNIVFFPATSKKEDAENLAAAQRDAVDFDVRVDTQDQGMYRFLTSQQLFKLLDCLLESHRFAKAFNSNNEQRTALWKAGFKGKSKPNLLKQETSSLACGLRILFRMYMDESRVSAWEEVQQRLLNVCSEALSYFLTLTSESHREAWTNLLLLFLTKVLKISDNRFKAHASFYYPLLCEIMQFDLIPELRAVLRRFFLRIGVVFQISQPPEQELGINKQ.

Residues 2-224 (YEGKKTKNMF…QEAKQMEKER (223 aa)) are DCB; DCB:DCB domain and DCB:HUS domain interaction. Basic and acidic residues predominate over residues 46–58 (AETEKQSPPHGEA). Disordered regions lie at residues 46 to 65 (AETEKQSPPHGEAKAGSSTL), 216 to 248 (EAKQMEKERHRQHHHLLQSPVSHHEPESPQLRY), 267 to 302 (LHTNDVDKSLQDDTEPENGSDISSAENEQTEADQAT), and 378 to 413 (TPISVAYTPSLPDDRLSVSSNDTQESGNSSGPSPGA). Residue S52 is modified to Phosphoserine. Residues 267 to 277 (LHTNDVDKSLQ) show a composition bias toward basic and acidic residues. Phosphoserine occurs at positions 286, 289, 290, 397, and 410. Residues 394–409 (SVSSNDTQESGNSSGP) show a composition bias toward polar residues. The interval 557–577 (ADAQSVVDIYVNYDCDLNAAN) is HUS; DCB:HUS domain interaction. In terms of domain architecture, SEC7 spans 709–840 (FNKKPKRGIQ…IIMLTTDLHS (132 aa)). Residues 711-715 (KKPKR) carry the Nuclear localization signal (NLS) motif. Residue S1079 is modified to Phosphoserine. The disordered stretch occupies residues 1543–1562 (RPNSGETAPPPPSPVSEKPL). Phosphoserine is present on residues S1566 and S1569.

Homodimer. Interacts with ARFGEF2/BIG2; both proteins are probably part of the same or very similar macromolecular complexes. Interacts with FKBP2. Interacts with MYO9B. Interacts with PRKAR1A and PRKAR2A. Interacts with PPP1CC. Interacts with NCL, FBL, NUP62 and U3 small nucleolar RNA. Interacts with DPY30. Interacts with PDE3A. Interacts with KANK1. Interacts with TBC1D22A and TBC1D22B. Interacts (via N-terminus) with ARL1. Post-translationally, phosphorylated. In vitro phosphorylated by PKA reducing its GEF activity and dephosphorylated by phosphatase PP1. As to expression, expressed in placenta, lung, heart, brain, kidney and pancreas.

Its subcellular location is the cytoplasm. It localises to the perinuclear region. It is found in the golgi apparatus. The protein localises to the trans-Golgi network membrane. The protein resides in the nucleus. Its subcellular location is the nucleolus. It localises to the nucleus matrix. Its activity is regulated as follows. Inhibited by brefeldin A. In terms of biological role, promotes guanine-nucleotide exchange on ARF1 and ARF3. Promotes the activation of ARF1/ARF3 through replacement of GDP with GTP. Involved in vesicular trafficking. Required for the maintenance of Golgi structure; the function may be independent of its GEF activity. Required for the maturation of integrin beta-1 in the Golgi. Involved in the establishment and persistence of cell polarity during directed cell movement in wound healing. Proposed to act as A kinase-anchoring protein (AKAP) and may mediate crosstalk between Arf and PKA pathways. Inhibits GAP activity of MYO9B probably through competitive RhoA binding. The function in the nucleus remains to be determined. The chain is Brefeldin A-inhibited guanine nucleotide-exchange protein 1 (ARFGEF1) from Homo sapiens (Human).